The chain runs to 396 residues: Elongation factor Tu (396 aa).

One can recognise a tr-type G domain in the interval 10 to 206; it reads KPHVNVGTIG…ALDTYIPTPE (197 aa). Residues 19–26 are G1; it reads GHVDHGKT. 19–26 contacts GTP; that stretch reads GHVDHGKT. Residue T26 coordinates Mg(2+). The interval 60 to 64 is G2; sequence GITIN. Residues 81–84 are G3; it reads DCPG. Residues 81-85 and 136-139 each bind GTP; these read DCPGH and NKCD. The segment at 136–139 is G4; sequence NKCD. Residues 174 to 176 are G5; it reads SAK.

The protein belongs to the TRAFAC class translation factor GTPase superfamily. Classic translation factor GTPase family. EF-Tu/EF-1A subfamily. As to quaternary structure, monomer.

It is found in the cytoplasm. The enzyme catalyses GTP + H2O = GDP + phosphate + H(+). Functionally, GTP hydrolase that promotes the GTP-dependent binding of aminoacyl-tRNA to the A-site of ribosomes during protein biosynthesis. The protein is Elongation factor Tu of Burkholderia mallei (strain NCTC 10247).